We begin with the raw amino-acid sequence, 494 residues long: Xylan glycosyltransferase MUCI21 (494 aa).

The Cytoplasmic portion of the chain corresponds to 1–40 (MRQNLKKVAQIKVDESKKLFPYVFRVKTSCGNCAKRSKPK). Residues 41–61 (LIYLLIFSLISSCFVFAPQLL) traverse the membrane as a helical; Signal-anchor for type II membrane protein segment. Topologically, residues 62-494 (CFPYPSALFL…LIDAYAKSIR (433 aa)) are lumenal. Residue Asn375 is glycosylated (N-linked (GlcNAc...) asparagine).

Belongs to the glycosyltransferase 61 family.

It is found in the golgi apparatus membrane. Functionally, glycosyletransferase required for the proper composition and structural properties of released seed coat mucilage. Required for the production of highly branched xylan polymers in seed coat mucilage. Facilitates the addition of xylose residues directly to the xylan backbone. Xylan with xylose side chains seems to be necessary for pectin attachment to the seed surface. Essential for xylan synthesis in seed coat epidermal (SCE) cells. This Arabidopsis thaliana (Mouse-ear cress) protein is Xylan glycosyltransferase MUCI21.